Here is a 317-residue protein sequence, read N- to C-terminus: Melanocyte-stimulating hormone receptor (317 aa).

The Extracellular segment spans residues methionine 1–glutamate 37. Asparagine 29 carries N-linked (GlcNAc...) asparagine glycosylation. The helical transmembrane segment at valine 38 to isoleucine 63 threads the bilayer. The Cytoplasmic portion of the chain corresponds to alanine 64–proline 72. The chain crosses the membrane as a helical span at residues methionine 73–leucine 93. The Extracellular portion of the chain corresponds to glutamate 94–asparagine 118. A helical membrane pass occupies residues valine 119 to valine 140. Residues aspartate 141 to arginine 163 lie on the Cytoplasmic side of the membrane. The helical transmembrane segment at alanine 164–tyrosine 183 threads the bilayer. Topologically, residues aspartate 184 to cysteine 191 are extracellular. Residues leucine 192–leucine 211 traverse the membrane as a helical segment. At alanine 212 to alanine 240 the chain is on the cytoplasmic side. The chain crosses the membrane as a helical span at residues alanine 241–leucine 266. Residues cysteine 267–asparagine 279 are Extracellular-facing. The helical transmembrane segment at phenylalanine 280–phenylalanine 300 threads the bilayer. Over arginine 301–tryptophan 317 the chain is Cytoplasmic. Residue cysteine 315 is the site of S-palmitoyl cysteine attachment.

Belongs to the G-protein coupled receptor 1 family. In terms of assembly, interacts with MGRN1, but does not undergo MGRN1-mediated ubiquitination; this interaction competes with GNAS-binding and thus inhibits agonist-induced cAMP production. Interacts with OPN3; the interaction results in a decrease in MC1R-mediated cAMP signaling and ultimately a decrease in melanin production in melanocytes.

It localises to the cell membrane. Its function is as follows. Receptor for MSH (alpha, beta and gamma) and ACTH. The activity of this receptor is mediated by G proteins which activate adenylate cyclase. Mediates melanogenesis, the production of eumelanin (black/brown) and phaeomelanin (red/yellow), via regulation of cAMP signaling in melanocytes. This Cercopithecus mitis (Blue monkey) protein is Melanocyte-stimulating hormone receptor (MC1R).